Here is a 255-residue protein sequence, read N- to C-terminus: Triosephosphate isomerase (255 aa).

10–12 (NWK) provides a ligand contact to substrate. The active-site Electrophile is histidine 96. Glutamate 168 serves as the catalytic Proton acceptor. Residues glycine 174, serine 213, and 234–235 (GG) contribute to the substrate site.

The protein belongs to the triosephosphate isomerase family. Homodimer.

The protein resides in the cytoplasm. It carries out the reaction D-glyceraldehyde 3-phosphate = dihydroxyacetone phosphate. The protein operates within carbohydrate biosynthesis; gluconeogenesis. Its pathway is carbohydrate degradation; glycolysis; D-glyceraldehyde 3-phosphate from glycerone phosphate: step 1/1. Its function is as follows. Involved in the gluconeogenesis. Catalyzes stereospecifically the conversion of dihydroxyacetone phosphate (DHAP) to D-glyceraldehyde-3-phosphate (G3P). This Histophilus somni (strain 129Pt) (Haemophilus somnus) protein is Triosephosphate isomerase.